The sequence spans 228 residues: MAIEVKICGLSTAETLEAALAAGADLVGFVHFPKSPRHVPLEAAPALSRAVAGRAAKVLLLVDPDDATLAAAVAAFQPDIIQLHGKESPERVAAIRARTGRPVMKALPVSGPADLAVVPAYAAVADRLLFDAKPAPDDTLPGGNGRVFDWTLLAGLDPGRPVMLSGGLDAGNVSQALSVVRLDGVDVSSGVETAPGLKSPEKILAFVRAVKAAEAASRPSRLKKVEAP.

Belongs to the TrpF family.

The catalysed reaction is N-(5-phospho-beta-D-ribosyl)anthranilate = 1-(2-carboxyphenylamino)-1-deoxy-D-ribulose 5-phosphate. Its pathway is amino-acid biosynthesis; L-tryptophan biosynthesis; L-tryptophan from chorismate: step 3/5. This chain is N-(5'-phosphoribosyl)anthranilate isomerase, found in Azorhizobium caulinodans (strain ATCC 43989 / DSM 5975 / JCM 20966 / LMG 6465 / NBRC 14845 / NCIMB 13405 / ORS 571).